A 166-amino-acid chain; its full sequence is Large ribosomal subunit protein uL10 (166 aa).

Belongs to the universal ribosomal protein uL10 family. Part of the ribosomal stalk of the 50S ribosomal subunit. The N-terminus interacts with L11 and the large rRNA to form the base of the stalk. The C-terminus forms an elongated spine to which L12 dimers bind in a sequential fashion forming a multimeric L10(L12)X complex.

In terms of biological role, forms part of the ribosomal stalk, playing a central role in the interaction of the ribosome with GTP-bound translation factors. This chain is Large ribosomal subunit protein uL10, found in Streptococcus pyogenes serotype M28 (strain MGAS6180).